We begin with the raw amino-acid sequence, 221 residues long: Uracil-DNA glycosylase 1 (221 aa).

Asp-61 functions as the Proton acceptor in the catalytic mechanism.

This sequence belongs to the uracil-DNA glycosylase (UDG) superfamily. UNG family.

It is found in the cytoplasm. It carries out the reaction Hydrolyzes single-stranded DNA or mismatched double-stranded DNA and polynucleotides, releasing free uracil.. In terms of biological role, excises uracil residues from the DNA which can arise as a result of misincorporation of dUMP residues by DNA polymerase or due to deamination of cytosine. The chain is Uracil-DNA glycosylase 1 from Listeria monocytogenes serotype 4b (strain F2365).